The following is an 83-amino-acid chain: Large ribosomal subunit protein eL37 (83 aa).

Zn(2+) is bound by residues cysteine 19, cysteine 22, cysteine 34, and cysteine 37. The C4-type zinc finger occupies 19–37 (CRRCGRNSYHVQWERCAAC).

Belongs to the eukaryotic ribosomal protein eL37 family. The cofactor is Zn(2+).

Its function is as follows. Binds to the 23S rRNA. The chain is Large ribosomal subunit protein eL37 (RPL37) from Leishmania donovani.